A 108-amino-acid polypeptide reads, in one-letter code: Putative lipid-binding protein AIR1B (108 aa).

The signal sequence occupies residues 1–23; sequence MAPRTSLALFVSLNLLFFTCTSA. 3 cysteine pairs are disulfide-bonded: C28–C55, C35–C54, and C71–C107.

The protein belongs to the plant LTP family. PEARLI1 subfamily.

It is found in the secreted. In Arabidopsis thaliana (Mouse-ear cress), this protein is Putative lipid-binding protein AIR1B (AIR1B).